Consider the following 480-residue polypeptide: Major facilitator superfamily domain-containing protein 12 (480 aa).

An N-acetylmethionine modification is found at M1. Topologically, residues 1 to 26 (MGPGPPAAGAAPSPRPLSLVARLSYA) are cytoplasmic. A helical membrane pass occupies residues 27–47 (VGHFLNDLCASMWFTYLLLYL). Residues 48–56 (HSVRAYSSR) are Lumenal-facing. The chain crosses the membrane as a helical span at residues 57–77 (GAGLLLLLGQVADGLCTPLVG). The Cytoplasmic portion of the chain corresponds to 78–97 (YEADRAASCCARYGPRKAWH). Residues 98-118 (LVGTVCVLLSFPFIFSPCLGC) traverse the membrane as a helical segment. Residues 119–124 (GAATPE) are Lumenal-facing. The chain crosses the membrane as a helical span at residues 125-145 (WAALLYYGPFIVIFQFGWAST). Residues 146–170 (QISHLSLIPELVTNDHEKVELTALR) are Cytoplasmic-facing. Residues 171–191 (YAFTVVANITVYGAAWLLLHL) form a helical membrane-spanning segment. Residues 192 to 218 (QGSSRVEPTQDISISDQLGGQDVPVFR) are Lumenal-facing. The helical transmembrane segment at 219–239 (NLSLLVVGVGAVFSLLFHLGT) threads the bilayer. Over 240–279 (RERRRPHAEEPGEHTPLLAPATAQPLLLWKHWLREPAFYQ) the chain is Cytoplasmic. T254 is subject to Phosphothreonine; by MTOR. A helical transmembrane segment spans residues 280–302 (VGILYMTTRLIVNLSQTYMAMYL). Topologically, residues 303-310 (TYSLHLPK) are lumenal. The chain crosses the membrane as a helical span at residues 311-331 (KFIATIPLVMYLSGFLSSFLM). Residues 332 to 347 (KPINKCIGRNMTYFSG) lie on the Cytoplasmic side of the membrane. The next 2 membrane-spanning stretches (helical) occupy residues 348–368 (LLVI…GVAV) and 369–389 (YAAA…SLAM). The Cytoplasmic portion of the chain corresponds to 390-402 (TADLIGPHTNSGA). Residues 403-423 (FVYGSMSFLDKVANGLAVMAI) traverse the membrane as a helical segment. Residues 424–446 (QSLHPCPSELCCRACVSFYHWAM) are Lumenal-facing. The chain crosses the membrane as a helical span at residues 447 to 467 (VAVTGGVGVAAALCLCSLLLW). The Cytoplasmic segment spans residues 468-480 (PTRLRRWDRDARP).

This sequence belongs to the major facilitator superfamily. Post-translationally, phosphorylation at Thr-254 by MTOR via mTORC1 pathway promotes cysteine transport in lysosomes, thereby regulating lysosomal cysteine and cystine storage and redox homeostasis. Widely expressed, with high expression in primary melanocytes.

The protein localises to the melanosome membrane. Its subcellular location is the lysosome membrane. It catalyses the reaction L-cysteine(in) = L-cysteine(out). In terms of biological role, transporter that mediates the import of cysteine into melanosomes, thereby regulating skin pigmentation. In melanosomes, cysteine import is required both for normal levels of cystine, the oxidized dimer of cysteine, and provide cysteine for the production of the cysteinyldopas used in pheomelanin synthesis, thereby regulating skin pigmentation. Also catalyzes import of cysteine into lysosomes in non-pigmented cells, regulating lysosomal cystine and cysteine storage, which is essnetial for redox homeostasis. The chain is Major facilitator superfamily domain-containing protein 12 from Homo sapiens (Human).